Here is a 958-residue protein sequence, read N- to C-terminus: Probable protein phosphatase DDB_G0282105 (958 aa).

A run of 2 helical transmembrane segments spans residues Val2–Val22 and Phe26–Phe46. The stretch at Ser142–Ser330 forms a coiled coil. The span at Gln312–Ser328 shows a compositional bias: basic and acidic residues. Disordered stretches follow at residues Gln312–Ile361, Ser380–Lys421, His445–Ile475, Ile491–Pro525, and Asn619–Lys659. Composition is skewed to low complexity over residues Ser329 to Ile361, Ser390 to Arg401, Thr452 to Ile475, Ile491 to Ser515, and Asn619 to Lys655. Residues Asn613 to Glu666 are a coiled coil. One can recognise a PPM-type phosphatase domain in the interval Lys675–Leu958. 4 residues coordinate Mn(2+): Asp722, Gly723, Asp905, and Asp949.

The protein in the C-terminal section; belongs to the PP2C family. Mg(2+) serves as cofactor. Mn(2+) is required as a cofactor.

It localises to the membrane. It catalyses the reaction O-phospho-L-seryl-[protein] + H2O = L-seryl-[protein] + phosphate. The catalysed reaction is O-phospho-L-threonyl-[protein] + H2O = L-threonyl-[protein] + phosphate. The polypeptide is Probable protein phosphatase DDB_G0282105 (Dictyostelium discoideum (Social amoeba)).